The sequence spans 526 residues: Na(+)/H(+) antiporter NhaB (526 aa).

The next 13 membrane-spanning stretches (helical) occupy residues 14-34 (FLGY…LINP), 35-55 (LLFY…EFIF), 99-119 (MLLV…LFVF), 122-142 (LLLR…AAAF), 146-166 (FLDA…FYGI), 206-226 (LMMH…VGEP), 239-259 (FVDF…CGIL), 307-327 (AVIG…VGLI), 328-348 (GLSV…HAIG), 357-377 (FTAL…QQLF), 397-417 (YLFN…SVYI), 451-471 (ATPN…APLI), and 479-499 (VIMA…CVEF).

The protein belongs to the NhaB Na(+)/H(+) (TC 2.A.34) antiporter family.

The protein resides in the cell inner membrane. The enzyme catalyses 2 Na(+)(in) + 3 H(+)(out) = 2 Na(+)(out) + 3 H(+)(in). Na(+)/H(+) antiporter that extrudes sodium in exchange for external protons. In Pectobacterium atrosepticum (strain SCRI 1043 / ATCC BAA-672) (Erwinia carotovora subsp. atroseptica), this protein is Na(+)/H(+) antiporter NhaB.